We begin with the raw amino-acid sequence, 236 residues long: Sugar fermentation stimulation protein homolog (236 aa).

Belongs to the SfsA family.

This Pseudomonas fluorescens (strain SBW25) protein is Sugar fermentation stimulation protein homolog.